The primary structure comprises 125 residues: Fumarate reductase subunit D (125 aa).

Transmembrane regions (helical) follow at residues 30 to 50, 63 to 83, and 105 to 125; these read FAMI…LGVI, FATS…PMWH, and IACY…IFMI.

The protein belongs to the FrdD family. As to quaternary structure, part of an enzyme complex containing four subunits: a flavoprotein (FrdA), an iron-sulfur protein (FrdB), and two hydrophobic anchor proteins (FrdC and FrdD).

The protein localises to the cell inner membrane. Its function is as follows. Anchors the catalytic components of the fumarate reductase complex to the cell membrane, binds quinones. This chain is Fumarate reductase subunit D, found in Vibrio campbellii (strain ATCC BAA-1116).